The sequence spans 82 residues: ATP synthase subunit c (82 aa).

The next 2 membrane-spanning stretches (helical) occupy residues 5–25 (IASASVLAAALAIGLAAIGPG) and 57–77 (LAFMESLTIYGLVIALVLLFA).

Belongs to the ATPase C chain family. F-type ATPases have 2 components, F(1) - the catalytic core - and F(0) - the membrane proton channel. F(1) has five subunits: alpha(3), beta(3), gamma(1), delta(1), epsilon(1). F(0) has four main subunits: a(1), b(1), b'(1) and c(10-14). The alpha and beta chains form an alternating ring which encloses part of the gamma chain. F(1) is attached to F(0) by a central stalk formed by the gamma and epsilon chains, while a peripheral stalk is formed by the delta, b and b' chains.

The protein resides in the cellular thylakoid membrane. In terms of biological role, f(1)F(0) ATP synthase produces ATP from ADP in the presence of a proton or sodium gradient. F-type ATPases consist of two structural domains, F(1) containing the extramembraneous catalytic core and F(0) containing the membrane proton channel, linked together by a central stalk and a peripheral stalk. During catalysis, ATP synthesis in the catalytic domain of F(1) is coupled via a rotary mechanism of the central stalk subunits to proton translocation. Functionally, key component of the F(0) channel; it plays a direct role in translocation across the membrane. A homomeric c-ring of between 10-14 subunits forms the central stalk rotor element with the F(1) delta and epsilon subunits. This chain is ATP synthase subunit c, found in Cyanothece sp. (strain PCC 7425 / ATCC 29141).